Reading from the N-terminus, the 366-residue chain is Peptide chain release factor 2 (366 aa).

The residue at position 253 (Q253) is an N5-methylglutamine.

Belongs to the prokaryotic/mitochondrial release factor family. Methylated by PrmC. Methylation increases the termination efficiency of RF2.

It localises to the cytoplasm. Peptide chain release factor 2 directs the termination of translation in response to the peptide chain termination codons UGA and UAA. This Yersinia pestis protein is Peptide chain release factor 2.